Here is a 315-residue protein sequence, read N- to C-terminus: WD repeat domain-containing protein 83 (315 aa).

WD repeat units lie at residues 23–62 (CSQG…LLRT), 65–104 (GHGY…VVRK), 107–146 (GHAG…PEPV), 151–188 (EARD…VSSD), 190–228 (VGSP…LLGE), 231–272 (GHKN…LALA), and 275–313 (VGSN…AEGG).

It belongs to the WD repeat MORG1 family. Interacts with EGLN3/PHD3. Interacts with ERK signaling proteins MAP2K1/MEK1, MAP2K2/MEK2, LAMTOR3, ARAF/Raf-1, MAPK1/ERK2 and MAPK3/ERK1. Identified in the spliceosome C complex. Interacts with PARD6B and CRB3. Interacts strongly with GTP-bound RRAGA but not with inactive GDP-bound. Interacts with p62/SQSTM1. In terms of tissue distribution, ubiquitous.

The protein resides in the cytoplasm. It localises to the lysosome. It is found in the nucleus. Molecular scaffold protein for various multimeric protein complexes. Acts as a module in the assembly of a multicomponent scaffold for the ERK pathway, linking ERK responses to specific agonists. At low concentrations it enhances ERK activation, whereas high concentrations lead to the inhibition of ERK activation. Also involved in response to hypoxia by acting as a negative regulator of HIF1A/HIF-1-alpha via its interaction with EGLN3/PHD3. May promote degradation of HIF1A. May act by recruiting signaling complexes to a specific upstream activator. May also be involved in pre-mRNA splicing. Participates in tight junction development by regulating apico-basal polarity, a key step in tissue development and organization. Mechanistically, regulates the translocation of PAR6-aPKC from the cytoplasm to the apical surface by acting as an adapter between PARD6B AND CRB3. Also acts as a negative regulator of mTORC1 under nutrient-rich conditions by binding to the active Rag GTPases to inhibit mTORC1 localization to the lysosome and phosphorylation of downstream targets. This facilitates constitutive basal autophagy during nutrient availability. In Mus musculus (Mouse), this protein is WD repeat domain-containing protein 83 (Wdr83).